Reading from the N-terminus, the 350-residue chain is Bifunctional methylenetetrahydrofolate dehydrogenase/cyclohydrolase, mitochondrial (350 aa).

The N-terminal 35 residues, 1–35, are a transit peptide targeting the mitochondrion; it reads MAATSLMSALAARLLQPAHSCSLRLRPFHLAAVRN. At Lys50 the chain carries N6-acetyllysine; alternate. Lys50 is covalently cross-linked (Glycyl lysine isopeptide (Lys-Gly) (interchain with G-Cter in SUMO2); alternate). Residues 84–88 and 131–133 each bind substrate; these read YVLNK and VQL. NAD(+)-binding positions include 200–202 and Arg233; that span reads GRS. 309–313 is a substrate binding site; the sequence is PGGVG.

This sequence belongs to the tetrahydrofolate dehydrogenase/cyclohydrolase family. Homodimer. Mg(2+) serves as cofactor.

It is found in the mitochondrion. The enzyme catalyses (6R)-5,10-methylene-5,6,7,8-tetrahydrofolate + NAD(+) = (6R)-5,10-methenyltetrahydrofolate + NADH. It carries out the reaction (6R)-5,10-methenyltetrahydrofolate + H2O = (6R)-10-formyltetrahydrofolate + H(+). Its function is as follows. Although its dehydrogenase activity is NAD-specific, it can also utilize NADP at a reduced efficiency. The polypeptide is Bifunctional methylenetetrahydrofolate dehydrogenase/cyclohydrolase, mitochondrial (MTHFD2) (Homo sapiens (Human)).